The primary structure comprises 683 residues: Leishmanolysin-like peptidase (683 aa).

H257 provides a ligand contact to Zn(2+). Residue E258 is part of the active site. Zn(2+)-binding residues include H261 and H364.

Belongs to the peptidase M8 family. The cofactor is Zn(2+).

The protein resides in the cytoplasm. In terms of biological role, essential for the coordination of mitotic progression, and also plays a role in cell migration. In Drosophila melanogaster (Fruit fly), this protein is Leishmanolysin-like peptidase (Invadolysin).